Consider the following 417-residue polypeptide: UDP-N-acetylglucosamine 1-carboxyvinyltransferase (417 aa).

Position 22–23 (22–23 (KN)) interacts with phosphoenolpyruvate. UDP-N-acetyl-alpha-D-glucosamine is bound at residue Arg-92. Cys-116 functions as the Proton donor in the catalytic mechanism. The residue at position 116 (Cys-116) is a 2-(S-cysteinyl)pyruvic acid O-phosphothioketal. Residues Asp-304 and Ile-326 each coordinate UDP-N-acetyl-alpha-D-glucosamine.

Belongs to the EPSP synthase family. MurA subfamily.

The protein localises to the cytoplasm. The enzyme catalyses phosphoenolpyruvate + UDP-N-acetyl-alpha-D-glucosamine = UDP-N-acetyl-3-O-(1-carboxyvinyl)-alpha-D-glucosamine + phosphate. The protein operates within cell wall biogenesis; peptidoglycan biosynthesis. Functionally, cell wall formation. Adds enolpyruvyl to UDP-N-acetylglucosamine. The protein is UDP-N-acetylglucosamine 1-carboxyvinyltransferase of Desulforapulum autotrophicum (strain ATCC 43914 / DSM 3382 / VKM B-1955 / HRM2) (Desulfobacterium autotrophicum).